A 1364-amino-acid chain; its full sequence is Kinectin (1364 aa).

The Cytoplasmic portion of the chain corresponds to 1–6 (MEFYES). A helical; Signal-anchor for type II membrane protein transmembrane segment spans residues 7 to 29 (TYFIILIPSVVITVIFLFFWLFM). Over 30–1364 (KETLYDEVLA…KGREHYQLVE (1335 aa)) the chain is Lumenal. Composition is skewed to basic and acidic residues over residues 46–56 (KFPPTKSDKKK), 73–86 (HESDSESTPRDFKL), 121–135 (QKAAQDDHVTKESEG), and 170–179 (QKNDDQDTKT). Positions 46-207 (KFPPTKSDKK…VKQENVSGKK (162 aa)) are disordered. Asn202, Asn267, Asn623, Asn638, Asn704, Asn775, Asn976, Asn1061, Asn1088, and Asn1094 each carry an N-linked (GlcNAc...) asparagine glycan. Positions 315 to 1085 (KASKAESAAA…VETRELLQKL (771 aa)) form a coiled coil. Residues 1116-1306 (SGSEDIKVME…ASLEREIGKV (191 aa)) are a coiled coil.

The protein belongs to the kinectin family. In terms of assembly, parallel homodimers formed between the membrane-bound and the cytosolic form, and also between 2 cytosolic forms. Both the membrane and cytoplasmic forms seem to be myristoylated.

It localises to the endoplasmic reticulum membrane. Receptor for kinesin thus involved in kinesin-driven vesicle motility. In Gallus gallus (Chicken), this protein is Kinectin (KTN1).